We begin with the raw amino-acid sequence, 320 residues long: ATP-dependent 6-phosphofructokinase (320 aa).

Glycine 12 is an ATP binding site. Residue 22-26 coordinates ADP; sequence RGVVR. Residues 73–74 and 103–106 each bind ATP; these read RF and GDGS. A Mg(2+)-binding site is contributed by aspartate 104. 126-128 contacts substrate; sequence TID. The Proton acceptor role is filled by aspartate 128. Arginine 155 contributes to the ADP binding site. Substrate contacts are provided by residues arginine 163 and 170–172; that span reads MGR. Residues 186 to 188, lysine 212, and 214 to 216 contribute to the ADP site; these read GCE and KKH. Residues glutamate 223, arginine 244, and 250 to 253 contribute to the substrate site; that span reads HIQR.

It belongs to the phosphofructokinase type A (PFKA) family. ATP-dependent PFK group I subfamily. Prokaryotic clade 'B1' sub-subfamily. As to quaternary structure, homotetramer. The cofactor is Mg(2+).

The protein localises to the cytoplasm. The enzyme catalyses beta-D-fructose 6-phosphate + ATP = beta-D-fructose 1,6-bisphosphate + ADP + H(+). It participates in carbohydrate degradation; glycolysis; D-glyceraldehyde 3-phosphate and glycerone phosphate from D-glucose: step 3/4. With respect to regulation, allosterically activated by ADP and other diphosphonucleosides, and allosterically inhibited by phosphoenolpyruvate. Catalyzes the phosphorylation of D-fructose 6-phosphate to fructose 1,6-bisphosphate by ATP, the first committing step of glycolysis. The sequence is that of ATP-dependent 6-phosphofructokinase from Aliivibrio fischeri (strain ATCC 700601 / ES114) (Vibrio fischeri).